The following is a 244-amino-acid chain: 5-oxoprolinase subunit A (244 aa).

Belongs to the LamB/PxpA family. As to quaternary structure, forms a complex composed of PxpA, PxpB and PxpC.

The catalysed reaction is 5-oxo-L-proline + ATP + 2 H2O = L-glutamate + ADP + phosphate + H(+). Its function is as follows. Catalyzes the cleavage of 5-oxoproline to form L-glutamate coupled to the hydrolysis of ATP to ADP and inorganic phosphate. This Shigella flexneri protein is 5-oxoprolinase subunit A.